We begin with the raw amino-acid sequence, 60 residues long: MAVPKRKTSPSKRGMRRSADALKAPTYVEDKNSGEMRRPHHIDLKTGMYRGRQVLTPKES.

The span at 1 to 16 (MAVPKRKTSPSKRGMR) shows a compositional bias: basic residues. The disordered stretch occupies residues 1–60 (MAVPKRKTSPSKRGMRRSADALKAPTYVEDKNSGEMRRPHHIDLKTGMYRGRQVLTPKES). The segment covering 28-44 (VEDKNSGEMRRPHHIDL) has biased composition (basic and acidic residues).

The protein belongs to the bacterial ribosomal protein bL32 family.

The polypeptide is Large ribosomal subunit protein bL32 (Mesorhizobium japonicum (strain LMG 29417 / CECT 9101 / MAFF 303099) (Mesorhizobium loti (strain MAFF 303099))).